We begin with the raw amino-acid sequence, 171 residues long: Peptide deformylase (171 aa).

The Fe cation site is built by Cys-91 and His-133. Glu-134 is an active-site residue. His-137 lines the Fe cation pocket.

The protein belongs to the polypeptide deformylase family. Fe(2+) serves as cofactor.

It carries out the reaction N-terminal N-formyl-L-methionyl-[peptide] + H2O = N-terminal L-methionyl-[peptide] + formate. Functionally, removes the formyl group from the N-terminal Met of newly synthesized proteins. Requires at least a dipeptide for an efficient rate of reaction. N-terminal L-methionine is a prerequisite for activity but the enzyme has broad specificity at other positions. The chain is Peptide deformylase from Mannheimia succiniciproducens (strain KCTC 0769BP / MBEL55E).